Reading from the N-terminus, the 457-residue chain is tRNA-2-methylthio-N(6)-dimethylallyladenosine synthase (457 aa).

Positions 4 to 119 (RNFHIITFGC…APDAIERLYA (116 aa)) constitute an MTTase N-terminal domain. [4Fe-4S] cluster contacts are provided by cysteine 13, cysteine 48, cysteine 82, cysteine 164, cysteine 168, and cysteine 171. Residues 150–385 (NTLALMAYVN…QATQLEHSTS (236 aa)) form the Radical SAM core domain. The TRAM domain maps to 388-456 (KSRVGVETTV…KHSLVAEPLI (69 aa)).

This sequence belongs to the methylthiotransferase family. MiaB subfamily. In terms of assembly, monomer. The cofactor is [4Fe-4S] cluster.

It is found in the cytoplasm. It catalyses the reaction N(6)-dimethylallyladenosine(37) in tRNA + (sulfur carrier)-SH + AH2 + 2 S-adenosyl-L-methionine = 2-methylsulfanyl-N(6)-dimethylallyladenosine(37) in tRNA + (sulfur carrier)-H + 5'-deoxyadenosine + L-methionine + A + S-adenosyl-L-homocysteine + 2 H(+). Functionally, catalyzes the methylthiolation of N6-(dimethylallyl)adenosine (i(6)A), leading to the formation of 2-methylthio-N6-(dimethylallyl)adenosine (ms(2)i(6)A) at position 37 in tRNAs that read codons beginning with uridine. This chain is tRNA-2-methylthio-N(6)-dimethylallyladenosine synthase, found in Lawsonia intracellularis (strain PHE/MN1-00).